Consider the following 537-residue polypeptide: Chaperonin GroEL (537 aa).

Residues 29–32 (TLGP), 86–90 (DGTTT), Gly413, 477–479 (NAA), and Asp493 each bind ATP.

It belongs to the chaperonin (HSP60) family. In terms of assembly, forms a cylinder of 14 subunits composed of two heptameric rings stacked back-to-back. Interacts with the co-chaperonin GroES.

It localises to the cytoplasm. The catalysed reaction is ATP + H2O + a folded polypeptide = ADP + phosphate + an unfolded polypeptide.. Its function is as follows. Together with its co-chaperonin GroES, plays an essential role in assisting protein folding. The GroEL-GroES system forms a nano-cage that allows encapsulation of the non-native substrate proteins and provides a physical environment optimized to promote and accelerate protein folding. The chain is Chaperonin GroEL from Lactobacillus delbrueckii subsp. bulgaricus (strain ATCC 11842 / DSM 20081 / BCRC 10696 / JCM 1002 / NBRC 13953 / NCIMB 11778 / NCTC 12712 / WDCM 00102 / Lb 14).